A 129-amino-acid polypeptide reads, in one-letter code: Large ribosomal subunit protein bL17 (129 aa).

It belongs to the bacterial ribosomal protein bL17 family. In terms of assembly, part of the 50S ribosomal subunit. Contacts protein L32.

This chain is Large ribosomal subunit protein bL17, found in Actinobacillus succinogenes (strain ATCC 55618 / DSM 22257 / CCUG 43843 / 130Z).